A 367-amino-acid polypeptide reads, in one-letter code: Outer membrane porin C (367 aa).

Residues 1-21 (MKVKVLSLLVPALLVAGAANA) form the signal peptide. Over 22 to 33 (AEVYNKDGNKLD) the chain is Periplasmic. The beta stranded transmembrane segment at 34-42 (LYGKVDGLH) threads the bilayer. The Extracellular segment spans residues 43 to 53 (YFSDNKDVDGD). Residues 54–63 (QTYMRLGFKG) traverse the membrane as a beta stranded segment. The Periplasmic segment spans residues 64–73 (ETQVTDQLTG). Residues 74–84 (YGQWEYQIQGN) form a beta stranded membrane-spanning segment. Residues 85 to 91 (SAENENN) are Extracellular-facing. The chain crosses the membrane as a beta stranded span at residues 92–101 (SWTRVAFAGL). Residues 102–106 (KFQDV) are Periplasmic-facing. A beta stranded transmembrane segment spans residues 107–115 (GSFDYGRNY). The loop L3; may constrict the pore stretch occupies residues 116–133 (GVVYDVTSWTDVLPEFGG). Residues 116–141 (GVVYDVTSWTDVLPEFGGDTYGSDNF) are Extracellular-facing. Residues 142 to 154 (MQQRGNGFATYRN) form a beta stranded membrane-spanning segment. At 155–163 (TDFFGLVDG) the chain is on the periplasmic side. Residues 164–171 (LNFAVQYQ) traverse the membrane as a beta stranded segment. Residues 172–200 (GKNGNPSGEGFTSGVTNNGRDALRQNGDG) are Extracellular-facing. The beta stranded transmembrane segment at 201 to 207 (VGGSITY) threads the bilayer. Over 208-211 (DYEG) the chain is Periplasmic. Residues 212–219 (FGIGGAIS) traverse the membrane as a beta stranded segment. Residues 220–241 (SSKRTDAQNTAAYIGNGDRAET) are Extracellular-facing. A beta stranded transmembrane segment spans residues 242–248 (YTGGLKY). Residues 249–252 (DANN) are Periplasmic-facing. Residues 253 to 260 (IYLAAQYT) form a beta stranded membrane-spanning segment. Topologically, residues 261-269 (QTYNATRVG) are extracellular. Residues 270 to 286 (SLGWANKAQNFEAVAQY) form a beta stranded membrane-spanning segment. The Periplasmic segment spans residues 287–291 (QFDFG). The chain crosses the membrane as a beta stranded span at residues 292–299 (LRPSLAYL). Residues 300 to 318 (QSKGKNLGRGYDDEDILKY) lie on the Extracellular side of the membrane. A beta stranded membrane pass occupies residues 319–326 (VDVGATYY). Topologically, residues 327–330 (FNKN) are periplasmic. Residues 331–338 (MSTYVDYK) form a beta stranded membrane-spanning segment. The Extracellular segment spans residues 339-358 (INLLDDNQFTRDAGINTDNI). Mg(2+) contacts are provided by N340, L342, and T355. The beta stranded transmembrane segment at 359-366 (VALGLVYQ) threads the bilayer. F367 is a topological domain (periplasmic).

Belongs to the Gram-negative porin family. In terms of assembly, homotrimer. Forms mixed heterotrimers with OmpF and with PhoE; other mixed heterotrimers are also probable.

It is found in the cell outer membrane. Forms pores that allow passive diffusion of small molecules across the outer membrane. In terms of biological role, (Microbial infection) Supports colicin E5 entry in the absence of its major receptor OmpF. Its function is as follows. (Microbial infection) A mixed OmpC-OmpF heterotrimer is the outer membrane receptor for toxin CdiA-EC536; polymorphisms in extracellular loops 4 and 5 of OmpC confer susceptibility to CdiA-EC536-mediated toxicity. This Escherichia coli (strain K12) protein is Outer membrane porin C (ompC).